The primary structure comprises 109 residues: Aquaporin-2 (109 aa).

Residues 1–6 lie on the Cytoplasmic side of the membrane; that stretch reads SIAFSR. Residues 7 to 27 form a helical membrane-spanning segment; it reads AVFAEFLATLIFVFFGLGSAL. Residues 28-35 are Extracellular-facing; sequence NWQQSLPS. A helical transmembrane segment spans residues 36-54; it reads VLQIAMAFGLAIGTLVQAL. At 55 to 59 the chain is on the cytoplasmic side; it reads GHISG. An intramembrane region (discontinuously helical) is located at residues 60–69; that stretch reads AHINPAVTVA. The NPA 1 signature appears at 63-65; sequence NPA. Residues 70 to 80 are Cytoplasmic-facing; the sequence is CLVGCHVSFLR. The chain crosses the membrane as a helical span at residues 81–102; the sequence is AAFYVAAQLLGAVAGAALLHEV. At 103 to 109 the chain is on the extracellular side; it reads TPSDVRG.

The protein belongs to the MIP/aquaporin (TC 1.A.8) family. As to quaternary structure, homotetramer. Serine phosphorylation is necessary and sufficient for expression at the apical membrane. Endocytosis is not phosphorylation-dependent. In terms of processing, N-glycosylated.

The protein localises to the apical cell membrane. The protein resides in the basolateral cell membrane. Its subcellular location is the cell membrane. It localises to the cytoplasmic vesicle membrane. It is found in the golgi apparatus. The protein localises to the trans-Golgi network membrane. It catalyses the reaction H2O(in) = H2O(out). It carries out the reaction glycerol(in) = glycerol(out). Functionally, forms a water-specific channel that provides the plasma membranes of renal collecting duct with high permeability to water, thereby permitting water to move in the direction of an osmotic gradient. Plays an essential role in renal water homeostasis. Could also be permeable to glycerol. The polypeptide is Aquaporin-2 (Talpa europaea (European mole)).